Here is a 580-residue protein sequence, read N- to C-terminus: Capsid vertex component 2 (580 aa).

2 interaction with major capsid protein/MCP regions span residues 1–49 (MDPY…ETAA) and 1–50 (MDPY…TAAE). Residues 108-129 (AEEADAARGDEPAGGGDGGAPP) are disordered. Positions 119-128 (PAGGGDGGAP) are enriched in gly residues.

The protein belongs to the herpesviridae CVC2 protein family. As to quaternary structure, heterodimerizes with CVC1. Interacts with major capsid protein/MCP and triplex capsid protein 1/TRX1 at the pentamer vertices. Interacts with the large tegument protein/LTP. Interacts with host NUP214; this interaction might be essential to the capsid docking to the host nuclear pore. Interacts with host TMEM250.

It is found in the virion. The protein localises to the host nucleus. Functionally, capsid vertex-specific component that plays a role during viral DNA encapsidation, assuring correct genome cleavage and presumably stabilizing capsids that contain full-length viral genomes. Participates in the interaction between the capsid and the tegument through interaction with the large tegument protein/LTP. May mediate the capsid docking to the nuclear pore allowing entry of the viral genome into the host nucleus through binding to host nucleoporins NUP214. This is Capsid vertex component 2 from Human herpesvirus 1 (strain 17) (HHV-1).